A 654-amino-acid polypeptide reads, in one-letter code: Integrator complex subunit 9 (654 aa).

1D-myo-inositol hexakisphosphate contacts are provided by Met1, Arg2, Thr18, Phe19, Arg504, Lys508, and Arg509.

It belongs to the metallo-beta-lactamase superfamily. RNA-metabolizing metallo-beta-lactamase-like family. INTS9 subfamily. As to quaternary structure, belongs to the multiprotein complex Integrator, at least composed of IntS1, IntS2, IntS3, IntS4, omd/IntS5, IntS6, defl/IntS7, IntS8, IntS9, IntS10, IntS11, IntS12, asun/IntS13, IntS14 and IntS15. The core complex associates with protein phosphatase 2A subunits mts/PP2A and Pp2A-29B, to form the Integrator-PP2A (INTAC) complex. Within the complex, interacts with IntS1 and IntS12. IntS9 is part of the RNA endonuclease subcomplex, composed of IntS4, IntS9, IntS11 and inositol hexakisphosphate (InsP6).

It localises to the nucleus. It is found in the cytoplasm. Its subcellular location is the cytosol. Functionally, component of the integrator complex, a multiprotein complex that terminates RNA polymerase II (Pol II) transcription in the promoter-proximal region of genes. The integrator complex provides a quality checkpoint during transcription elongation by driving premature transcription termination of transcripts that are unfavorably configured for transcriptional elongation: the complex terminates transcription by (1) catalyzing dephosphorylation of the C-terminal domain (CTD) of Pol II subunit Polr2A/Rbp1 and Spt5, and (2) degrading the exiting nascent RNA transcript via endonuclease activity. The integrator complex is also involved in the 3'-end processing of the U7 snRNA, and also the spliceosomal snRNAs U1, U2, U4 and U5. This chain is Integrator complex subunit 9, found in Drosophila melanogaster (Fruit fly).